Consider the following 1196-residue polypeptide: DNA polymerase beta (1196 aa).

The protein belongs to the DNA polymerase type-B family.

The enzyme catalyses DNA(n) + a 2'-deoxyribonucleoside 5'-triphosphate = DNA(n+1) + diphosphate. Functionally, DNA-directed DNA polymerase involved in viral DNA replication. This is DNA polymerase beta from African swine fever virus (isolate Pig/Kenya/KEN-50/1950) (ASFV).